We begin with the raw amino-acid sequence, 373 residues long: Chaperone protein DnaJ (373 aa).

The region spanning 5–70 (DYYEVLGVAK…QKRAAYDRYG (66 aa)) is the J domain. The CR-type zinc finger occupies 133 to 211 (GFDTEIRVPS…CDGVGRTRRN (79 aa)). Positions 146, 149, 163, 166, 185, 188, 199, and 202 each coordinate Zn(2+). CXXCXGXG motif repeat units lie at residues 146-153 (CDTCHGSG), 163-170 (CRTCGGSG), 185-192 (CPTCHGTG), and 199-206 (CPSCDGVG).

Belongs to the DnaJ family. As to quaternary structure, homodimer. It depends on Zn(2+) as a cofactor.

It is found in the cytoplasm. Participates actively in the response to hyperosmotic and heat shock by preventing the aggregation of stress-denatured proteins and by disaggregating proteins, also in an autonomous, DnaK-independent fashion. Unfolded proteins bind initially to DnaJ; upon interaction with the DnaJ-bound protein, DnaK hydrolyzes its bound ATP, resulting in the formation of a stable complex. GrpE releases ADP from DnaK; ATP binding to DnaK triggers the release of the substrate protein, thus completing the reaction cycle. Several rounds of ATP-dependent interactions between DnaJ, DnaK and GrpE are required for fully efficient folding. Also involved, together with DnaK and GrpE, in the DNA replication of plasmids through activation of initiation proteins. This is Chaperone protein DnaJ from Bordetella bronchiseptica (strain ATCC BAA-588 / NCTC 13252 / RB50) (Alcaligenes bronchisepticus).